Consider the following 176-residue polypeptide: Non-specific lipid transfer protein GPI-anchored 12 (176 aa).

The N-terminal stretch at 1–20 is a signal peptide; that stretch reads MLTTNTLAVLLLLFLSLCSG. Disulfide bonds link Cys-40-Cys-83, Cys-50-Cys-67, Cys-68-Cys-110, and Cys-81-Cys-120. N-linked (GlcNAc...) asparagine glycosylation occurs at Asn-46. Asn-149 carries GPI-anchor amidated asparagine lipidation. Positions 150-176 are cleaved as a propeptide — removed in mature form; the sequence is GAMTTKYCGVALNSLALLLLFTFLSLS.

It belongs to the plant LTP family. Preferentially expressed in the endodermis of hypocotyls and roots of seedlings, and in petals and anthers of inflorescences. May also be expressed in siliques, carpels and pedicels.

The protein localises to the cell membrane. Functionally, probable lipid transfer protein. This is Non-specific lipid transfer protein GPI-anchored 12 from Arabidopsis thaliana (Mouse-ear cress).